Consider the following 470-residue polypeptide: Rhamnulokinase (470 aa).

12-16 (ASSGR) serves as a coordination point for ATP. Substrate-binding positions include Ala80 and 237 to 239 (HDT). The Proton acceptor role is filled by Asp238. Residue Thr259 participates in ATP binding. Residue Asn296 participates in substrate binding. Gln304 lines the ATP pocket. Cys353 and Cys370 are disulfide-bonded. Gly402 contributes to the ATP binding site.

This sequence belongs to the rhamnulokinase family. It depends on Mg(2+) as a cofactor.

The enzyme catalyses L-rhamnulose + ATP = L-rhamnulose 1-phosphate + ADP + H(+). Its pathway is carbohydrate degradation; L-rhamnose degradation; glycerone phosphate from L-rhamnose: step 2/3. Its function is as follows. Involved in the catabolism of L-rhamnose (6-deoxy-L-mannose). Catalyzes the transfer of the gamma-phosphate group from ATP to the 1-hydroxyl group of L-rhamnulose to yield L-rhamnulose 1-phosphate. This chain is Rhamnulokinase, found in Oceanobacillus iheyensis (strain DSM 14371 / CIP 107618 / JCM 11309 / KCTC 3954 / HTE831).